The chain runs to 336 residues: tRNA-cytidine(32) 2-sulfurtransferase (336 aa).

Positions 11–23 are enriched in low complexity; the sequence is TAAAPAGTGEATP. The segment at 11–31 is disordered; it reads TAAAPAGTGEATPVHARARSP. The short motif at 75–80 is the PP-loop motif element; it reads SGGKDS. 3 residues coordinate [4Fe-4S] cluster: Cys-150, Cys-153, and Cys-241.

Belongs to the TtcA family. As to quaternary structure, homodimer. It depends on Mg(2+) as a cofactor. The cofactor is [4Fe-4S] cluster.

It localises to the cytoplasm. It carries out the reaction cytidine(32) in tRNA + S-sulfanyl-L-cysteinyl-[cysteine desulfurase] + AH2 + ATP = 2-thiocytidine(32) in tRNA + L-cysteinyl-[cysteine desulfurase] + A + AMP + diphosphate + H(+). It functions in the pathway tRNA modification. Functionally, catalyzes the ATP-dependent 2-thiolation of cytidine in position 32 of tRNA, to form 2-thiocytidine (s(2)C32). The sulfur atoms are provided by the cysteine/cysteine desulfurase (IscS) system. This chain is tRNA-cytidine(32) 2-sulfurtransferase, found in Paraburkholderia xenovorans (strain LB400).